The chain runs to 339 residues: U11/U12 small nuclear ribonucleoprotein 48 kDa protein (339 aa).

The segment at 55–82 (VVICPYDSNHHMPKSSLAKHMASCRLRK) adopts a CHHC U11-48K-type zinc-finger fold. Zn(2+)-binding residues include Cys58, His64, His74, and Cys78. Residues Lys87 and Lys104 each participate in a glycyl lysine isopeptide (Lys-Gly) (interchain with G-Cter in SUMO2) cross-link. Residues 255–339 (HWQEEQEKAE…HSHKRRKQKI (85 aa)) form a disordered region. The segment covering 294–309 (RHRRDRSRSPHKRKRN) has biased composition (basic residues). The span at 310 to 328 (KDKDKNCESRRRKERDGER) shows a compositional bias: basic and acidic residues. Positions 329–339 (HHSHKRRKQKI) are enriched in basic residues.

As to quaternary structure, component of the U11/U12 snRNPs that are part of the U12-type spliceosome. Not found in the major spliceosome.

It is found in the nucleus. Likely involved in U12-type 5' splice site recognition. The polypeptide is U11/U12 small nuclear ribonucleoprotein 48 kDa protein (SNRNP48) (Homo sapiens (Human)).